The chain runs to 457 residues: Acetylcholine receptor subunit alpha-1-B (457 aa).

The N-terminal stretch at 1–20 is a signal peptide; sequence MDYTASCLIFLFIAAGTVFG. The Extracellular portion of the chain corresponds to 21–230; the sequence is TDHETRLIGD…ITYHFVLQRL (210 aa). 2 cysteine pairs are disulfide-bonded: Cys148–Cys162 and Cys212–Cys213. Asn161 carries N-linked (GlcNAc...) asparagine glycosylation. Helical transmembrane passes span 231 to 255, 263 to 281, and 297 to 316; these read PLYF…VFYL, MTLS…LVIV, and YMLF…VIVI. The Cytoplasmic portion of the chain corresponds to 317-428; the sequence is NTHHRSPSTH…WKFVAMVLDH (112 aa). A helical membrane pass occupies residues 429–447; the sequence is ILLAVFMTVCVIGTLAVFA.

This sequence belongs to the ligand-gated ion channel (TC 1.A.9) family. Acetylcholine receptor (TC 1.A.9.1) subfamily. Alpha-1/CHRNA1 sub-subfamily. One of the alpha chains that assemble within the acetylcholine receptor, a pentamer of two alpha chains, a beta, a delta, and a gamma or epsilon chains.

Its subcellular location is the postsynaptic cell membrane. It is found in the cell membrane. It catalyses the reaction K(+)(in) = K(+)(out). The enzyme catalyses Na(+)(in) = Na(+)(out). Upon acetylcholine binding, the AChR responds by an extensive change in conformation that affects all subunits and leads to opening of an ion-conducting channel across the plasma membrane. This is Acetylcholine receptor subunit alpha-1-B (chrna1-b) from Xenopus laevis (African clawed frog).